The following is a 434-amino-acid chain: Alpha-enolase (434 aa).

Residue Ser40 coordinates Mg(2+). Substrate-binding residues include His158 and Glu167. The active-site Proton donor is Glu210. Residues Asp245, Glu293, and Asp318 each coordinate Mg(2+). The substrate site is built by Glu293 and Asp318. Lys343 functions as the Proton acceptor in the catalytic mechanism. Substrate contacts are provided by residues 370–373 and Lys394; that span reads SHRS.

This sequence belongs to the enolase family. Homodimer. The cofactor is Mg(2+).

It is found in the cytoplasm. The catalysed reaction is (2R)-2-phosphoglycerate = phosphoenolpyruvate + H2O. Its pathway is carbohydrate degradation; glycolysis; pyruvate from D-glyceraldehyde 3-phosphate: step 4/5. The protein is Alpha-enolase (ENO1) of Gallus gallus (Chicken).